The primary structure comprises 671 residues: TBC1 domain family member 15 (671 aa).

At A2 the chain carries N-acetylalanine. 5 positions are modified to phosphoserine: S23, S32, S70, S205, and S257. The region spanning 329 to 539 (GLSHSLRKQA…RLWEVMWTEL (211 aa)) is the Rab-GAP TBC domain. 2 positions are modified to phosphoserine: S623 and S655. The disordered stretch occupies residues 650-671 (EAKDDSPTQTLASPNACRLTPA). A Phosphothreonine modification is found at T669.

As to quaternary structure, interacts with non-phosphorylated form of RAB8A; phosphorylation of RAB8A at 'Thr-72' disrupts this interaction. Interacts with ARMC12. As to expression, ubiquitous, with highest expression in heart, liver and testis and lower expression in brain, spleen, lung, kidney and skeletal muscle.

It localises to the cytoplasm. Functionally, acts as a GTPase activating protein for RAB7A. Does not act on RAB4, RAB5 or RAB6. The protein is TBC1 domain family member 15 (Tbc1d15) of Mus musculus (Mouse).